The chain runs to 659 residues: Fructose-1,6-bisphosphatase class 3 (659 aa).

This sequence belongs to the FBPase class 3 family. The cofactor is Mn(2+).

It carries out the reaction beta-D-fructose 1,6-bisphosphate + H2O = beta-D-fructose 6-phosphate + phosphate. Its pathway is carbohydrate biosynthesis; gluconeogenesis. The polypeptide is Fructose-1,6-bisphosphatase class 3 (Clostridium botulinum (strain Alaska E43 / Type E3)).